We begin with the raw amino-acid sequence, 352 residues long: Holliday junction branch migration complex subunit RuvB (352 aa).

Positions 4–191 (TDKFSAPDRV…FGIVARLEFY (188 aa)) are large ATPase domain (RuvB-L). ATP contacts are provided by residues Leu-30, Arg-31, Gly-72, Lys-75, Thr-76, Thr-77, 138-140 (EDY), Arg-181, Tyr-191, and Arg-228. Thr-76 is a Mg(2+) binding site. A small ATPAse domain (RuvB-S) region spans residues 192-262 (TAEELARIVT…IADAALAMLD (71 aa)). The interval 265-352 (RVGFDLMDRK…GDSGDLIDGE (88 aa)) is head domain (RuvB-H). 3 residues coordinate DNA: Arg-301, Arg-320, and Arg-325.

Belongs to the RuvB family. In terms of assembly, homohexamer. Forms an RuvA(8)-RuvB(12)-Holliday junction (HJ) complex. HJ DNA is sandwiched between 2 RuvA tetramers; dsDNA enters through RuvA and exits via RuvB. An RuvB hexamer assembles on each DNA strand where it exits the tetramer. Each RuvB hexamer is contacted by two RuvA subunits (via domain III) on 2 adjacent RuvB subunits; this complex drives branch migration. In the full resolvosome a probable DNA-RuvA(4)-RuvB(12)-RuvC(2) complex forms which resolves the HJ.

Its subcellular location is the cytoplasm. The enzyme catalyses ATP + H2O = ADP + phosphate + H(+). The RuvA-RuvB-RuvC complex processes Holliday junction (HJ) DNA during genetic recombination and DNA repair, while the RuvA-RuvB complex plays an important role in the rescue of blocked DNA replication forks via replication fork reversal (RFR). RuvA specifically binds to HJ cruciform DNA, conferring on it an open structure. The RuvB hexamer acts as an ATP-dependent pump, pulling dsDNA into and through the RuvAB complex. RuvB forms 2 homohexamers on either side of HJ DNA bound by 1 or 2 RuvA tetramers; 4 subunits per hexamer contact DNA at a time. Coordinated motions by a converter formed by DNA-disengaged RuvB subunits stimulates ATP hydrolysis and nucleotide exchange. Immobilization of the converter enables RuvB to convert the ATP-contained energy into a lever motion, pulling 2 nucleotides of DNA out of the RuvA tetramer per ATP hydrolyzed, thus driving DNA branch migration. The RuvB motors rotate together with the DNA substrate, which together with the progressing nucleotide cycle form the mechanistic basis for DNA recombination by continuous HJ branch migration. Branch migration allows RuvC to scan DNA until it finds its consensus sequence, where it cleaves and resolves cruciform DNA. This is Holliday junction branch migration complex subunit RuvB from Cupriavidus pinatubonensis (strain JMP 134 / LMG 1197) (Cupriavidus necator (strain JMP 134)).